Consider the following 713-residue polypeptide: Oligopeptidase PhomG (713 aa).

A Zn(2+)-binding site is contributed by His-461. Glu-462 is a catalytic residue. His-465 and His-468 together coordinate Zn(2+).

Belongs to the peptidase M3 family. As to quaternary structure, monomer. Zn(2+) serves as cofactor.

The protein operates within mycotoxin biosynthesis. In terms of biological role, oligopeptidase; part of the gene cluster that mediates the biosynthesis of the phomopsins, a group of hexapeptide mycotoxins which infects lupins and causes lupinosis disease in livestock. Within the pathway, phomG and phomG' are probably involved in the processing of the phomA and phomA' precursors. The pathway starts with the processing of the precursor phomA by several endopeptidases including kexin proteases as well as the cluster-specific S41 family peptidase phomP1 and the oligopeptidase phomG to produce 10 identical copies of the hexapeptide Tyr-Val-Ile-Pro-Ile-Asp. After being excised from the precursor peptide, the core peptides are cyclized and modified post-translationally by enzymes encoded within the gene cluster. The timing and order of proteolysis of the phomA precursor and PTMs are still unknown. Two tyrosinase-like enzymes, phomQ1 and phomQ2, catalyze the chlorination and hydroxylation of Tyr, respectively. PhomYb, is proposed to be involved in the construction of the macrocyclic structure. The other 4 ustYa family proteins may be involved in PTMs that generate the unique structure of phomopsin A. PhomYa is required for the hydroxylation of C-beta of Tyr. PhomYc, phomYd, and phomYe are responsible for the biosynthesis of 2,3-dehydroisoleucine (dIle), 2,3-dehydroaspartic acid (dAsp), and 3,4-dehydroproline (dPro), respectively. While dIle formation by phomYc is indispensable for the installation of dAsp by phomYd, the order of the other PTMs have not been elucidated yet. Most of the biosynthetic enzymes likely have broad substrate specificity, and thus, there might be a metabolic grid from a precursor to phomopsin A. The enzyme(s) responsible for the biosynthesis of 3,4-dehydrovaline (dVal) have also not been identified yet. Finally, phomM acts as an S-adenosylmethionine-dependent alpha-N-methyltransferase that catalyzes two successive N-methylation reactions, converting N-desmethyl-phomopsin A to phomopsin A and phomopsin A further to an N,N-dimethylated congener called phomopsin E. This Diaporthe leptostromiformis (Lupinosis disease fungus) protein is Oligopeptidase PhomG.